The chain runs to 75 residues: Translation initiation factor IF-1 (75 aa).

Residues 1–72 enclose the S1-like domain; the sequence is MSKQDLIEME…TKGRITYRLK (72 aa).

It belongs to the IF-1 family. In terms of assembly, component of the 30S ribosomal translation pre-initiation complex which assembles on the 30S ribosome in the order IF-2 and IF-3, IF-1 and N-formylmethionyl-tRNA(fMet); mRNA recruitment can occur at any time during PIC assembly.

The protein resides in the cytoplasm. Functionally, one of the essential components for the initiation of protein synthesis. Stabilizes the binding of IF-2 and IF-3 on the 30S subunit to which N-formylmethionyl-tRNA(fMet) subsequently binds. Helps modulate mRNA selection, yielding the 30S pre-initiation complex (PIC). Upon addition of the 50S ribosomal subunit IF-1, IF-2 and IF-3 are released leaving the mature 70S translation initiation complex. The chain is Translation initiation factor IF-1 from Synechocystis sp. (strain ATCC 27184 / PCC 6803 / Kazusa).